Reading from the N-terminus, the 465-residue chain is E3 ubiquitin-protein ligase ORTHRUS-LIKE 1 (465 aa).

A disordered region spans residues 31–69; it reads TSLSSPLDRSGDVDPLPVSDESGGSKADESMTDADETKK. The RING-type zinc-finger motif lies at 109–148; the sequence is CSLCNQLPDRPVTILCGHNFCLKCFDKWIDQGNQICATCR. The region spanning 233-374 is the YDG domain; that stretch reads VRNQGVLVGE…FKVCRYLFVR (142 aa). The chain crosses the membrane as a helical span at residues 442 to 462; sequence MAMTCLLLFVLIILVGSSSIL.

It localises to the nucleus. Its subcellular location is the membrane. The catalysed reaction is S-ubiquitinyl-[E2 ubiquitin-conjugating enzyme]-L-cysteine + [acceptor protein]-L-lysine = [E2 ubiquitin-conjugating enzyme]-L-cysteine + N(6)-ubiquitinyl-[acceptor protein]-L-lysine.. It participates in protein modification; protein ubiquitination. E3 ubiquitin-protein ligase. May participate in methylation-dependent transcriptional regulation. Mediates ubiquitination with the E2 ubiquitin-conjugating enzyme UBC11. The sequence is that of E3 ubiquitin-protein ligase ORTHRUS-LIKE 1 (ORTHL) from Arabidopsis thaliana (Mouse-ear cress).